Consider the following 329-residue polypeptide: AUGMIN subunit 7 (329 aa).

A coiled-coil region spans residues 169-197 (DVSELETKLSEQAKILSNLQQKVDDLAAK).

Part of the augmin complex composed of 8 subunits. The complex acts on microtubules and interacts with gamma-tubulin in spindles and the phragmoplast.

Its subcellular location is the cytoplasm. The protein localises to the cytoskeleton. The protein resides in the spindle. It localises to the phragmoplast. In terms of biological role, contributes to the assembly of the acentrosomal spindle and phragmoplast microtubule arrays as part of the augmin complex. Regulates the association of gamma-tubulin with the spindle and phragmoplast microtubules. This Arabidopsis thaliana (Mouse-ear cress) protein is AUGMIN subunit 7.